The sequence spans 160 residues: Ribonuclease ARB_07070 (160 aa).

Residues 1–18 form the signal peptide; that stretch reads MVSFKAILTLSLIGAAFA. A disordered region spans residues 26 to 51; the sequence is AEPVEDSGAVANSPEGSGMDLGGTDP. E103 functions as the Proton acceptor in the catalytic mechanism. The active-site Proton donor is H144.

Belongs to the ribonuclease U2 family.

It is found in the secreted. Its function is as follows. This purine-specific ribonuclease cleaves 28S RNA in eukaryotic ribosomes, inhibits protein synthesis, and shows antitumor activity. This Arthroderma benhamiae (strain ATCC MYA-4681 / CBS 112371) (Trichophyton mentagrophytes) protein is Ribonuclease ARB_07070.